Here is a 111-residue protein sequence, read N- to C-terminus: MSDKTMKDIQAEVDRYIGQFKEGYFSPLAMMARLTEELGELAREVNHRYGEKPKKATEDDKSMEEEIGDVLFVLVCLANSLDISLEEAHDRVMHKFNTRDKDRWTRKEEGK.

In terms of assembly, homodimer, or homotetramer.

This is an uncharacterized protein from Bacillus subtilis (strain 168).